The following is a 254-amino-acid chain: Short-chain dehydrogenase srdF (254 aa).

8 residues coordinate NADP(+): Ile-18, Ser-37, Glu-67, Asn-95, Tyr-167, Lys-171, Val-199, and Thr-201. Tyr-167 serves as the catalytic Proton donor. Lys-171 functions as the Lowers pKa of active site Tyr in the catalytic mechanism.

The protein belongs to the short-chain dehydrogenases/reductases (SDR) family.

Its function is as follows. Short-chain dehydrogenase; part of the gene cluster that mediates the biosynthesis of sordarial, a salicylic aldehyde structurally related to the phytotoxin pyriculol. The most interesting aspect of this pathway is formation of an aromatic product from the highly reducing polyketide synthase srdA. SrdA synthesizes a reduced polyketide chain from one molecule of acetyl-CoA and five molecules of malonyl-CoA. The polyketide chain is then reductively released as an aldehyde. The oxidoreductases srdC, srdD and srdE then oxidize one of the hydroxy groups to facilitate the intramolecular aldol condensation, followed by dehydration to yield a salicylic aldehyde. This aldehyde can undergo facile reduction by endogenous reductases to yield the alcohol 1-hydroxy-2-hydroxymethyl-3-pent-1,3-dienylbenzene. The flavin-dependent srdI counteract against the propensity of the aldehydes to be reduced under physiological conditions and is responsible for reoxidizing 1-hydroxy-2-hydroxymethyl-3-pent-1,3-dienylbenzene back to the salicylic aldehyde. This salicylic aldehyde is then selectively epoxidized by the cupin-domain-containing oxidoreductase srdB to yield the epoxide, which can be hydrolyzed stereoselectively by the hydrolase srdG to give the final product sordarial. The sequence is that of Short-chain dehydrogenase srdF from Neurospora crassa (strain ATCC 24698 / 74-OR23-1A / CBS 708.71 / DSM 1257 / FGSC 987).